The primary structure comprises 247 residues: ATP synthase subunit a, chloroplastic (247 aa).

Helical transmembrane passes span 38–58, 95–115, 134–154, 199–219, and 220–240; these read QVLI…TLAV, VPFI…GALL, INTT…AGIS, LVVV…VMFL, and GLFT…AYIG.

This sequence belongs to the ATPase A chain family. In terms of assembly, F-type ATPases have 2 components, CF(1) - the catalytic core - and CF(0) - the membrane proton channel. CF(1) has five subunits: alpha(3), beta(3), gamma(1), delta(1), epsilon(1). CF(0) has four main subunits: a, b, b' and c.

The protein resides in the plastid. It is found in the chloroplast thylakoid membrane. Key component of the proton channel; it plays a direct role in the translocation of protons across the membrane. This Daucus carota (Wild carrot) protein is ATP synthase subunit a, chloroplastic.